The sequence spans 330 residues: GTPase Obg (330 aa).

Positions 1 to 159 constitute an Obg domain; it reads MHFIDEVKIY…MWIHLSLKLL (159 aa). One can recognise an OBG-type G domain in the interval 160–327; it reads SDVGLVGLPN…IVKLALETIK (168 aa). Residues 166 to 173, 191 to 195, 212 to 215, 279 to 282, and 308 to 310 contribute to the GTP site; these read GLPNAGKS, FTTLV, DIPG, NKCD, and STC. The Mg(2+) site is built by serine 173 and threonine 193.

It belongs to the TRAFAC class OBG-HflX-like GTPase superfamily. OBG GTPase family. In terms of assembly, monomer. Mg(2+) is required as a cofactor.

The protein resides in the cytoplasm. An essential GTPase which binds GTP, GDP and possibly (p)ppGpp with moderate affinity, with high nucleotide exchange rates and a fairly low GTP hydrolysis rate. Plays a role in control of the cell cycle, stress response, ribosome biogenesis and in those bacteria that undergo differentiation, in morphogenesis control. The polypeptide is GTPase Obg (Rickettsia conorii (strain ATCC VR-613 / Malish 7)).